The sequence spans 318 residues: Transaldolase (318 aa).

The active-site Schiff-base intermediate with substrate is the Lys132.

The protein belongs to the transaldolase family. Type 1 subfamily. Homodimer.

The protein resides in the cytoplasm. The enzyme catalyses D-sedoheptulose 7-phosphate + D-glyceraldehyde 3-phosphate = D-erythrose 4-phosphate + beta-D-fructose 6-phosphate. It participates in carbohydrate degradation; pentose phosphate pathway; D-glyceraldehyde 3-phosphate and beta-D-fructose 6-phosphate from D-ribose 5-phosphate and D-xylulose 5-phosphate (non-oxidative stage): step 2/3. In terms of biological role, transaldolase is important for the balance of metabolites in the pentose-phosphate pathway. This is Transaldolase from Shewanella sediminis (strain HAW-EB3).